The following is a 506-amino-acid chain: uncharacterized protein (506 aa).

It to R.prowazekii RP789, RP027 and RP028.

This is an uncharacterized protein from Synechocystis sp. (strain ATCC 27184 / PCC 6803 / Kazusa).